The following is a 395-amino-acid chain: Elongation factor Tu (395 aa).

In terms of domain architecture, tr-type G spans 10-205; sequence KPHVNIGTIG…CDTWIPLPPR (196 aa). Residues 19 to 26 form a G1 region; sequence GHVDHGKT. 19 to 26 lines the GTP pocket; it reads GHVDHGKT. Position 26 (Thr26) interacts with Mg(2+). Residues 60-64 form a G2 region; that stretch reads GITIN. The interval 81-84 is G3; the sequence is DCPG. Residues 81–85 and 136–139 each bind GTP; these read DCPGH and NKCD. Positions 136–139 are G4; that stretch reads NKCD. The tract at residues 174–176 is G5; the sequence is SAL.

Belongs to the TRAFAC class translation factor GTPase superfamily. Classic translation factor GTPase family. EF-Tu/EF-1A subfamily. Monomer.

The protein localises to the cytoplasm. It catalyses the reaction GTP + H2O = GDP + phosphate + H(+). Its function is as follows. GTP hydrolase that promotes the GTP-dependent binding of aminoacyl-tRNA to the A-site of ribosomes during protein biosynthesis. This is Elongation factor Tu from Parabacteroides distasonis (strain ATCC 8503 / DSM 20701 / CIP 104284 / JCM 5825 / NCTC 11152).